The following is a 584-amino-acid chain: MALEDRCSPQSAPSPPGCLPHSPPQQHQHILQPNLRIHAIPISITALDMSLQPGTAATAATLYQQQQLQHLHQLQQLQQLHQQQLAASAGVFHHPSTSAAFDAAALHAAALQQRLSASGSPGAHSTGACSTPASTLTIKEEESDSILGDSFHNQTATTATEEDEEEDDDIDVDDTASVSGSARLPPPAHQQSKQSKPSLAFSISNILSDRFGDAAKQTKQGDSTGVSVSAAAAAASIFRPFEASRAAAATPSAFTRVDLLEFSRQQQAAAAAATAAMMLERANLLNCFNPAAYPRIHEELVQSRLRRSAAGNPNAVLPPTAKLTEPSVEKSALGSLCKTVSQIGQAQSTTPVTTPSSRPSQLASPPPASNASTISSSSSTAASCSASSSSGCSSAASSLNSSPSSRLAGANNASSPQPIPPPSAVSRDSGMESSDDTRSETGSTTTDGGKNEMWPAWVYCTRYSDRPSSGPRYRRPKQPKDKTNDEKRPRTAFSSEQLARLKREFNENRYLTERRRQQLSSELGLNEAQIKIWFQNKRAKIKKSTGSKNPLALQLMAQGLYNHTTVPLTKEEEELEMRMNGQIP.

5 disordered regions span residues 1–27, 141–198, 343–380, 392–451, and 465–492; these read MALE…PQQH, EESD…SKPS, IGQA…SSST, CSSA…GGKN, and DRPS…PRTA. Pro residues predominate over residues 12–23; the sequence is APSPPGCLPHSP. Positions 160–174 are enriched in acidic residues; it reads TEEDEEEDDDIDVDD. Over residues 189-198 the composition is skewed to polar residues; it reads HQQSKQSKPS. Low complexity-rich tracts occupy residues 348 to 380 and 392 to 405; these read STTP…SSST and CSSA…SPSS. Residues 478 to 489 are compositionally biased toward basic and acidic residues; that stretch reads QPKDKTNDEKRP. Positions 486–545 form a DNA-binding region, homeobox; sequence EKRPRTAFSSEQLARLKREFNENRYLTERRRQQLSSELGLNEAQIKIWFQNKRAKIKKST.

The protein belongs to the engrailed homeobox family.

It is found in the nucleus. This protein specifies the body segmentation pattern. It is required for the development of the central nervous system. Transcriptional regulator that repress activated promoters. This chain is Segmentation polarity homeobox protein engrailed (en), found in Drosophila virilis (Fruit fly).